The chain runs to 545 residues: Chaperonin GroEL (545 aa).

Residues 29–32 (TIGP), 86–90 (DGTTT), glycine 413, 478–480 (NAA), and aspartate 494 each bind ATP.

This sequence belongs to the chaperonin (HSP60) family. As to quaternary structure, forms a cylinder of 14 subunits composed of two heptameric rings stacked back-to-back. Interacts with the co-chaperonin GroES.

Its subcellular location is the cytoplasm. It catalyses the reaction ATP + H2O + a folded polypeptide = ADP + phosphate + an unfolded polypeptide.. Functionally, together with its co-chaperonin GroES, plays an essential role in assisting protein folding. The GroEL-GroES system forms a nano-cage that allows encapsulation of the non-native substrate proteins and provides a physical environment optimized to promote and accelerate protein folding. This is Chaperonin GroEL from Exiguobacterium sibiricum (strain DSM 17290 / CCUG 55495 / CIP 109462 / JCM 13490 / 255-15).